A 275-amino-acid chain; its full sequence is Adenosylcobinamide-GDP ribazoletransferase (275 aa).

6 helical membrane passes run 52–72 (VVGV…GVLG), 73–93 (VTPL…NRMM), 126–146 (MGFS…AALV), 181–201 (FGAM…LVAL), 208–228 (VAVW…GIIA), and 251–271 (IGAG…VAVA).

It belongs to the CobS family. The cofactor is Mg(2+).

The protein resides in the cell membrane. It carries out the reaction alpha-ribazole + adenosylcob(III)inamide-GDP = adenosylcob(III)alamin + GMP + H(+). It catalyses the reaction alpha-ribazole 5'-phosphate + adenosylcob(III)inamide-GDP = adenosylcob(III)alamin 5'-phosphate + GMP + H(+). It functions in the pathway cofactor biosynthesis; adenosylcobalamin biosynthesis; adenosylcobalamin from cob(II)yrinate a,c-diamide: step 7/7. Functionally, joins adenosylcobinamide-GDP and alpha-ribazole to generate adenosylcobalamin (Ado-cobalamin). Also synthesizes adenosylcobalamin 5'-phosphate from adenosylcobinamide-GDP and alpha-ribazole 5'-phosphate. The sequence is that of Adenosylcobinamide-GDP ribazoletransferase from Corynebacterium efficiens (strain DSM 44549 / YS-314 / AJ 12310 / JCM 11189 / NBRC 100395).